The primary structure comprises 363 residues: Type-2 angiotensin II receptor (363 aa).

At 1–45 (MKDNFSFAATSRNITSSLPFDNLNATGTNESAFNCSHKPADKHLE) the chain is on the extracellular side. Asn4, Asn13, Asn24, Asn29, and Asn34 each carry an N-linked (GlcNAc...) asparagine glycan. 2 disulfide bridges follow: Cys35–Cys290 and Cys117–Cys195. Residues 46–70 (AIPVLYYMIFVIGFAVNIVVVSLFC) form a helical membrane-spanning segment. The Cytoplasmic segment spans residues 71 to 80 (CQKGPKKVSS). The helical transmembrane segment at 81-104 (IYIFNLAVADLLLLATLPLWATYY) threads the bilayer. Residues Tyr103 and Tyr104 each coordinate angiotensin II. Over 105–114 (SYRYDWLFGP) the chain is Extracellular. The chain crosses the membrane as a helical span at residues 115 to 140 (VMCKVFGSFLTLNMFASIFFITCMSV). Residues 141 to 159 (DRYQSVIYPFLSQRRNPWQ) are Cytoplasmic-facing. Residues 160–181 (ASYVVPLVWCMACLSSLPTFYF) form a helical membrane-spanning segment. Angiotensin II contacts are provided by Arg182, Tyr204, and Lys215. At 182 to 206 (RDVRTIEYLGVNACIMAFPPEKYAQ) the chain is on the extracellular side. Residues 207–232 (WSAGIALMKNILGFIIPLIFIATCYF) form a helical membrane-spanning segment. The Cytoplasmic segment spans residues 233–257 (GIRKHLLKTNSYGKNRITRDQVLKM). Residues 258–281 (AAAVVLAFIICWLPFHVLTFLDAL) form a helical membrane-spanning segment. Asp279 lines the angiotensin II pocket. Residues 282-294 (TWMGIINSCEVIA) lie on the Extracellular side of the membrane. The chain crosses the membrane as a helical span at residues 295-320 (VIDLALPFAILLGFTNSCVNPFLYCF). Asp297 contacts angiotensin II. Residues 321 to 363 (VGNRFQQKLRSVFRVPITWLQGKRETMSCRKSSSLREMDTFVS) are Cytoplasmic-facing. A helix VIII region spans residues 324-333 (RFQQKLRSVF). Phosphoserine; by PKC is present on Ser354.

The protein belongs to the G-protein coupled receptor 1 family. As to quaternary structure, interacts with MTUS1. Abundant expression in fetal tissues, immature brain, skin wound and atretic ovarian follicles.

It localises to the cell membrane. Receptor for angiotensin II, a vasoconstricting peptide. Signals primarily via a non-canonical G-protein- and beta-arrestin independent pathways. Cooperates with MTUS1 to inhibit ERK2 activation and cell proliferation. This is Type-2 angiotensin II receptor from Rattus norvegicus (Rat).